The chain runs to 372 residues: MAFKYLLPLLLLSLLVANCASRPLYRLPSEAKHATKKPLQTSRPYNLAHRGSNGELPEETAPAYMRAIEEGADFIETDILSSKDGVLICHHDVNLDDTTDVADHKEFADRKRTYEVQGMNMTGFFTVDFTLKELKTLGAKQRYPFRDQQYNGKFPIITFDEYISIALDAPRVVGIYPEIKNPVFMNQQVKWADGKKFEDKFVETLKKYGYKGSYLSEDWLKQPIFIQSFAATSLVYISNMTDSPKLFLIDDVTILTEDTNKTYAEITSDAYLDYIKPYVIGIGPWKDTIVPVNNNRLMTPTDLVARAHSRNLQVHPYTYRNENQFLHLEFNQDPYLEYDYWLNKIGVDGLFTDFTGSLHNYQELKSPLPQQQ.

The N-terminal stretch at 1-21 (MAFKYLLPLLLLSLLVANCAS) is a signal peptide. The segment at 32 to 58 (KHATKKPLQTSRPYNLAHRGSNGELPE) is disordered. The 319-residue stretch at 44 to 362 (PYNLAHRGSN…DFTGSLHNYQ (319 aa)) folds into the GP-PDE domain. Asn120, Asn239, and Asn260 each carry an N-linked (GlcNAc...) asparagine glycan.

It belongs to the glycerophosphoryl diester phosphodiesterase family. Expressed in flowers and siliques.

The enzyme catalyses a sn-glycero-3-phosphodiester + H2O = an alcohol + sn-glycerol 3-phosphate + H(+). In Arabidopsis thaliana (Mouse-ear cress), this protein is Glycerophosphodiester phosphodiesterase GDPD6.